Consider the following 334-residue polypeptide: Beta-hexosaminidase (334 aa).

Substrate contacts are provided by residues D57, R65, R128, and K158–H159. H171 (proton donor/acceptor) is an active-site residue. D242 (nucleophile) is an active-site residue.

It belongs to the glycosyl hydrolase 3 family. NagZ subfamily.

It is found in the cytoplasm. It catalyses the reaction Hydrolysis of terminal non-reducing N-acetyl-D-hexosamine residues in N-acetyl-beta-D-hexosaminides.. Its pathway is cell wall biogenesis; peptidoglycan recycling. Its function is as follows. Plays a role in peptidoglycan recycling by cleaving the terminal beta-1,4-linked N-acetylglucosamine (GlcNAc) from peptide-linked peptidoglycan fragments, giving rise to free GlcNAc, anhydro-N-acetylmuramic acid and anhydro-N-acetylmuramic acid-linked peptides. This Methylococcus capsulatus (strain ATCC 33009 / NCIMB 11132 / Bath) protein is Beta-hexosaminidase.